Consider the following 474-residue polypeptide: tRNA-2-methylthio-N(6)-dimethylallyladenosine synthase (474 aa).

The MTTase N-terminal domain occupies 3 to 120; sequence KKLHIKTWGC…LPEMIEQVRR (118 aa). Cys12, Cys49, Cys83, Cys157, Cys161, and Cys164 together coordinate [4Fe-4S] cluster. The 233-residue stretch at 143–375 folds into the Radical SAM core domain; that stretch reads RAEGPTAFVS…QDRITQQAMR (233 aa). The 64-residue stretch at 378-441 folds into the TRAM domain; the sequence is RHMMGTVQRI…TNSLRGVFIR (64 aa).

The protein belongs to the methylthiotransferase family. MiaB subfamily. Monomer. It depends on [4Fe-4S] cluster as a cofactor.

Its subcellular location is the cytoplasm. The catalysed reaction is N(6)-dimethylallyladenosine(37) in tRNA + (sulfur carrier)-SH + AH2 + 2 S-adenosyl-L-methionine = 2-methylsulfanyl-N(6)-dimethylallyladenosine(37) in tRNA + (sulfur carrier)-H + 5'-deoxyadenosine + L-methionine + A + S-adenosyl-L-homocysteine + 2 H(+). Its function is as follows. Catalyzes the methylthiolation of N6-(dimethylallyl)adenosine (i(6)A), leading to the formation of 2-methylthio-N6-(dimethylallyl)adenosine (ms(2)i(6)A) at position 37 in tRNAs that read codons beginning with uridine. This chain is tRNA-2-methylthio-N(6)-dimethylallyladenosine synthase, found in Shewanella baltica (strain OS185).